The chain runs to 324 residues: Cyclin-dependent kinase 1 (324 aa).

The 304-residue stretch at 4 to 307 folds into the Protein kinase domain; sequence YQKIEKIGEG…AKQACMHPYF (304 aa). Residues 10–18 and K34 contribute to the ATP site; that span reads IGEGTYGVV. The residue at position 14 (T14) is a Phosphothreonine. At Y15 the chain carries Phosphotyrosine. Catalysis depends on D148, which acts as the Proton acceptor. A Phosphothreonine; by CAK modification is found at T181.

This sequence belongs to the protein kinase superfamily. CMGC Ser/Thr protein kinase family. CDC2/CDKX subfamily. Forms a stable but non-covalent complex with a regulatory subunit (SUC1) and with a cyclin.

The catalysed reaction is L-seryl-[protein] + ATP = O-phospho-L-seryl-[protein] + ADP + H(+). It catalyses the reaction L-threonyl-[protein] + ATP = O-phospho-L-threonyl-[protein] + ADP + H(+). Phosphorylation at Thr-14 or Tyr-15 inactivates the enzyme, while phosphorylation at Thr-181 activates it. Cyclin-dependent kinase that acts as a master regulator of the mitotic and meiotic cell cycles. The polypeptide is Cyclin-dependent kinase 1 (Ajellomyces capsulatus (Darling's disease fungus)).